A 70-amino-acid polypeptide reads, in one-letter code: Large ribosomal subunit protein bL31 (70 aa).

Zn(2+)-binding residues include C16, C18, C36, and C39.

This sequence belongs to the bacterial ribosomal protein bL31 family. Type A subfamily. In terms of assembly, part of the 50S ribosomal subunit. It depends on Zn(2+) as a cofactor.

Binds the 23S rRNA. This Fervidobacterium nodosum (strain ATCC 35602 / DSM 5306 / Rt17-B1) protein is Large ribosomal subunit protein bL31.